We begin with the raw amino-acid sequence, 450 residues long: Tol-Pal system protein TolB (450 aa).

An N-terminal signal peptide occupies residues 1–47 (MRKLWAPNWLSAKRHHANQAATRLIGRHALMAWLAAALALSAGAAQA).

This sequence belongs to the TolB family. In terms of assembly, the Tol-Pal system is composed of five core proteins: the inner membrane proteins TolA, TolQ and TolR, the periplasmic protein TolB and the outer membrane protein Pal. They form a network linking the inner and outer membranes and the peptidoglycan layer.

It is found in the periplasm. In terms of biological role, part of the Tol-Pal system, which plays a role in outer membrane invagination during cell division and is important for maintaining outer membrane integrity. This Cupriavidus pinatubonensis (strain JMP 134 / LMG 1197) (Cupriavidus necator (strain JMP 134)) protein is Tol-Pal system protein TolB.